Consider the following 439-residue polypeptide: GTPase Der (439 aa).

EngA-type G domains are found at residues 3–167 (PTVA…DKVG) and 176–351 (IKVA…GNYT). GTP is bound by residues 9-16 (GRPNVGKS), 56-60 (DTGGI), 119-122 (NKID), 182-189 (GKPNTGKS), 229-233 (DTAGL), and 294-297 (NKWD). Residues 352-436 (RRITTGQIND…PIVFLIREKG (85 aa)) enclose the KH-like domain.

The protein belongs to the TRAFAC class TrmE-Era-EngA-EngB-Septin-like GTPase superfamily. EngA (Der) GTPase family. Associates with the 50S ribosomal subunit.

GTPase that plays an essential role in the late steps of ribosome biogenesis. The polypeptide is GTPase Der (Caldicellulosiruptor saccharolyticus (strain ATCC 43494 / DSM 8903 / Tp8T 6331)).